The following is a 133-amino-acid chain: NLP effector protein 14 (133 aa).

The Conserved undecapeptide motifI I motif lies at 1–9 (MYSWYFPKD). Positions 16–22 (GHRHDWE) match the Hepta-peptide GHRHDWE motif II motif.

This sequence belongs to the Necrosis inducing protein (NPP1) family.

The protein resides in the secreted. Functionally, secreted effector that contributes strongly to virulence during infection by P.capsici. Causes large necrotic areas in both host C.annuum and non-host N.benthamiana. The sequence is that of NLP effector protein 14 from Phytophthora capsici.